We begin with the raw amino-acid sequence, 305 residues long: Formamidopyrimidine-DNA glycosylase (305 aa).

Catalysis depends on P2, which acts as the Schiff-base intermediate with DNA. E3 serves as the catalytic Proton donor. K59 acts as the Proton donor; for beta-elimination activity in catalysis. DNA contacts are provided by H92, R111, and R154. An FPG-type zinc finger spans residues 239–273 (QVFDRAGEPCPVCGTPIRKVAVAQRGTHFCPRCQP). Catalysis depends on R263, which acts as the Proton donor; for delta-elimination activity. Positions 282 to 305 (PRRARPGRRGNSVRVAAEPPGTYE) are disordered.

This sequence belongs to the FPG family. As to quaternary structure, monomer. Requires Zn(2+) as cofactor.

The enzyme catalyses Hydrolysis of DNA containing ring-opened 7-methylguanine residues, releasing 2,6-diamino-4-hydroxy-5-(N-methyl)formamidopyrimidine.. It carries out the reaction 2'-deoxyribonucleotide-(2'-deoxyribose 5'-phosphate)-2'-deoxyribonucleotide-DNA = a 3'-end 2'-deoxyribonucleotide-(2,3-dehydro-2,3-deoxyribose 5'-phosphate)-DNA + a 5'-end 5'-phospho-2'-deoxyribonucleoside-DNA + H(+). Functionally, involved in base excision repair of DNA damaged by oxidation or by mutagenic agents. Acts as a DNA glycosylase that recognizes and removes damaged bases. Has a preference for oxidized purines, such as 7,8-dihydro-8-oxoguanine (8-oxoG). Has AP (apurinic/apyrimidinic) lyase activity and introduces nicks in the DNA strand. Cleaves the DNA backbone by beta-delta elimination to generate a single-strand break at the site of the removed base with both 3'- and 5'-phosphates. The sequence is that of Formamidopyrimidine-DNA glycosylase from Symbiobacterium thermophilum (strain DSM 24528 / JCM 14929 / IAM 14863 / T).